We begin with the raw amino-acid sequence, 176 residues long: Small ribosomal subunit protein bS6 (176 aa).

The segment at 97-176 is disordered; the sequence is DQYTPNDSPP…VEPVDTTSEE (80 aa). The span at 140–160 shows a compositional bias: low complexity; the sequence is AVETVEPPAEPAEPVEAVETV. Residues 161–176 are compositionally biased toward acidic residues; it reads DTTEETVEPVDTTSEE.

Belongs to the bacterial ribosomal protein bS6 family.

In terms of biological role, binds together with bS18 to 16S ribosomal RNA. The polypeptide is Small ribosomal subunit protein bS6 (Gloeothece citriformis (strain PCC 7424) (Cyanothece sp. (strain PCC 7424))).